A 448-amino-acid chain; its full sequence is Cytoplasmic tRNA 2-thiolation protein 2 (448 aa).

This sequence belongs to the CTU2/NCS2 family.

It is found in the cytoplasm. It functions in the pathway tRNA modification; 5-methoxycarbonylmethyl-2-thiouridine-tRNA biosynthesis. Its function is as follows. Plays a central role in 2-thiolation of mcm(5)S(2)U at tRNA wobble positions of tRNA(Lys), tRNA(Glu) and tRNA(Gln). May act by forming a heterodimer with NCS6 that ligates sulfur from thiocarboxylated URM1 onto the uridine of tRNAs at wobble position. Prior mcm(5) tRNA modification by the elongator complex is required for 2-thiolation. May also be involved in protein urmylation. This chain is Cytoplasmic tRNA 2-thiolation protein 2, found in Debaryomyces hansenii (strain ATCC 36239 / CBS 767 / BCRC 21394 / JCM 1990 / NBRC 0083 / IGC 2968) (Yeast).